The following is a 282-amino-acid chain: ATP synthase gamma chain (282 aa).

This sequence belongs to the ATPase gamma chain family. In terms of assembly, F-type ATPases have 2 components, CF(1) - the catalytic core - and CF(0) - the membrane proton channel. CF(1) has five subunits: alpha(3), beta(3), gamma(1), delta(1), epsilon(1). CF(0) has three main subunits: a, b and c.

It localises to the cell membrane. Functionally, produces ATP from ADP in the presence of a proton gradient across the membrane. The gamma chain is believed to be important in regulating ATPase activity and the flow of protons through the CF(0) complex. The chain is ATP synthase gamma chain from Clostridium acetobutylicum (strain ATCC 824 / DSM 792 / JCM 1419 / IAM 19013 / LMG 5710 / NBRC 13948 / NRRL B-527 / VKM B-1787 / 2291 / W).